The following is a 145-amino-acid chain: Large ribosomal subunit protein uL13 (145 aa).

The protein belongs to the universal ribosomal protein uL13 family. As to quaternary structure, part of the 50S ribosomal subunit.

Its function is as follows. This protein is one of the early assembly proteins of the 50S ribosomal subunit, although it is not seen to bind rRNA by itself. It is important during the early stages of 50S assembly. This is Large ribosomal subunit protein uL13 from Exiguobacterium sibiricum (strain DSM 17290 / CCUG 55495 / CIP 109462 / JCM 13490 / 255-15).